The following is a 300-amino-acid chain: Probable amino-acid ABC transporter periplasmic-binding protein y4tE (300 aa).

Positions 1 to 27 are cleaved as a signal peptide; sequence MTHLKISKTAPAVARFLPAGRIASVAA.

This sequence belongs to the bacterial solute-binding protein 3 family.

Its subcellular location is the periplasm. Functionally, probably part of the binding-protein-dependent transport system y4tEFGH for an amino acid. This Sinorhizobium fredii (strain NBRC 101917 / NGR234) protein is Probable amino-acid ABC transporter periplasmic-binding protein y4tE.